A 253-amino-acid polypeptide reads, in one-letter code: Phosphate import ATP-binding protein PstB (253 aa).

The ABC transporter domain occupies 7–248 (IDARDVNFWY…PEKEATQNYI (242 aa)). ATP is bound at residue 39–46 (GPSGCGKS).

It belongs to the ABC transporter superfamily. Phosphate importer (TC 3.A.1.7) family. In terms of assembly, the complex is composed of two ATP-binding proteins (PstB), two transmembrane proteins (PstC and PstA) and a solute-binding protein (PstS).

Its subcellular location is the cell inner membrane. The enzyme catalyses phosphate(out) + ATP + H2O = ADP + 2 phosphate(in) + H(+). Functionally, part of the ABC transporter complex PstSACB involved in phosphate import. Responsible for energy coupling to the transport system. The sequence is that of Phosphate import ATP-binding protein PstB from Bacteroides fragilis (strain ATCC 25285 / DSM 2151 / CCUG 4856 / JCM 11019 / LMG 10263 / NCTC 9343 / Onslow / VPI 2553 / EN-2).